A 369-amino-acid polypeptide reads, in one-letter code: tRNA pseudouridine synthase D (369 aa).

Residue Asp-80 is the Nucleophile of the active site. The 163-residue stretch at 156–318 (GIPNWFGEQR…LKQERRALRL (163 aa)) folds into the TRUD domain.

Belongs to the pseudouridine synthase TruD family.

The enzyme catalyses uridine(13) in tRNA = pseudouridine(13) in tRNA. In terms of biological role, responsible for synthesis of pseudouridine from uracil-13 in transfer RNAs. In Xanthomonas axonopodis pv. citri (strain 306), this protein is tRNA pseudouridine synthase D.